Consider the following 583-residue polypeptide: Isocitrate dehydrogenase kinase/phosphatase (583 aa).

ATP contacts are provided by residues 315–321 (APGIRGM) and Lys336. Asp371 is an active-site residue.

The protein belongs to the AceK family.

The protein resides in the cytoplasm. It carries out the reaction L-seryl-[isocitrate dehydrogenase] + ATP = O-phospho-L-seryl-[isocitrate dehydrogenase] + ADP + H(+). Functionally, bifunctional enzyme which can phosphorylate or dephosphorylate isocitrate dehydrogenase (IDH) on a specific serine residue. This is a regulatory mechanism which enables bacteria to bypass the Krebs cycle via the glyoxylate shunt in response to the source of carbon. When bacteria are grown on glucose, IDH is fully active and unphosphorylated, but when grown on acetate or ethanol, the activity of IDH declines drastically concomitant with its phosphorylation. This Salmonella enteritidis PT4 (strain P125109) protein is Isocitrate dehydrogenase kinase/phosphatase.